The sequence spans 596 residues: NADH-quinone oxidoreductase subunit C/D (596 aa).

Residues 1 to 186 (MTDLTAQDAA…DPFELTKAKQ (186 aa)) are NADH dehydrogenase I subunit C. Positions 210-596 (DFMFLNLGPN…IDFVMSDVDR (387 aa)) are NADH dehydrogenase I subunit D.

This sequence in the N-terminal section; belongs to the complex I 30 kDa subunit family. In the C-terminal section; belongs to the complex I 49 kDa subunit family. In terms of assembly, NDH-1 is composed of 13 different subunits. Subunits NuoB, CD, E, F, and G constitute the peripheral sector of the complex.

The protein resides in the cell inner membrane. It carries out the reaction a quinone + NADH + 5 H(+)(in) = a quinol + NAD(+) + 4 H(+)(out). Functionally, NDH-1 shuttles electrons from NADH, via FMN and iron-sulfur (Fe-S) centers, to quinones in the respiratory chain. The immediate electron acceptor for the enzyme in this species is believed to be ubiquinone. Couples the redox reaction to proton translocation (for every two electrons transferred, four hydrogen ions are translocated across the cytoplasmic membrane), and thus conserves the redox energy in a proton gradient. The polypeptide is NADH-quinone oxidoreductase subunit C/D (Salmonella dublin (strain CT_02021853)).